The sequence spans 128 residues: Sulfurtransferase TusD (128 aa).

Catalysis depends on Cys78, which acts as the Cysteine persulfide intermediate.

The protein belongs to the DsrE/TusD family. As to quaternary structure, heterohexamer, formed by a dimer of trimers. The hexameric TusBCD complex contains 2 copies each of TusB, TusC and TusD. The TusBCD complex interacts with TusE.

The protein resides in the cytoplasm. Functionally, part of a sulfur-relay system required for 2-thiolation of 5-methylaminomethyl-2-thiouridine (mnm(5)s(2)U) at tRNA wobble positions. Accepts sulfur from TusA and transfers it in turn to TusE. In Klebsiella pneumoniae subsp. pneumoniae (strain ATCC 700721 / MGH 78578), this protein is Sulfurtransferase TusD.